The sequence spans 141 residues: Arsenate reductase (141 aa).

The active-site Nucleophile; cysteine thioarsenate intermediate is cysteine 12.

It belongs to the ArsC family.

The catalysed reaction is [glutaredoxin]-dithiol + arsenate + glutathione + H(+) = glutathionyl-S-S-[glutaredoxin] + arsenite + H2O. Involved in resistance to arsenate. Catalyzes the reduction of arsenate [As(V)] to arsenite [As(III)]. In Escherichia coli, this protein is Arsenate reductase.